The primary structure comprises 102 residues: Small ribosomal subunit protein uS10 (102 aa).

The protein belongs to the universal ribosomal protein uS10 family. In terms of assembly, part of the 30S ribosomal subunit.

Its function is as follows. Involved in the binding of tRNA to the ribosomes. This is Small ribosomal subunit protein uS10 from Bacillus anthracis (strain A0248).